The following is a 289-amino-acid chain: Bis(5'-nucleosyl)-tetraphosphatase, symmetrical (289 aa).

The protein belongs to the Ap4A hydrolase family.

It carries out the reaction P(1),P(4)-bis(5'-adenosyl) tetraphosphate + H2O = 2 ADP + 2 H(+). Hydrolyzes diadenosine 5',5'''-P1,P4-tetraphosphate to yield ADP. This is Bis(5'-nucleosyl)-tetraphosphatase, symmetrical from Yersinia pseudotuberculosis serotype O:3 (strain YPIII).